The primary structure comprises 88 residues: Putative sulfur carrier protein AF_0554 (88 aa).

Catalysis depends on C26, which acts as the Cysteine persulfide intermediate.

The protein belongs to the sulfur carrier protein TusA family.

The chain is Putative sulfur carrier protein AF_0554 from Archaeoglobus fulgidus (strain ATCC 49558 / DSM 4304 / JCM 9628 / NBRC 100126 / VC-16).